A 313-amino-acid polypeptide reads, in one-letter code: Potassium channel subfamily K member 6 (313 aa).

At 1–4 (MRRG) the chain is on the cytoplasmic side. The helical transmembrane segment at 5-25 (ALLAGALAAYAAYLVLGALLV) threads the bilayer. Residues Asn79 and Asn85 are each glycosylated (N-linked (GlcNAc...) asparagine). Positions 90 to 115 (AWDFASALFFASTLITTVGYGYTTPL) form an intramembrane region, pore-forming. Positions 106, 107, 108, and 109 each coordinate K(+). The segment at 106 to 111 (TVGYGY) is selectivity filter 1. Residues 121 to 141 (AFSIAFALLGVPTTMLLLTAS) traverse the membrane as a helical segment. The Cytoplasmic segment spans residues 142–172 (AQRLSLLLTHVPLSWLSMRWGWDPRRAACWH). A helical membrane pass occupies residues 173–193 (LVALLGVVVTVCFLVPAVIFA). The segment at residues 199–223 (WSFLDAFYFCFISLSTIGLGDYVPG) is an intramembrane region (pore-forming). K(+) contacts are provided by Thr214, Ile215, and Gly216. A selectivity filter 2 region spans residues 214–219 (TIGLGD). A helical transmembrane segment spans residues 236 to 256 (VLVTVYLFLGLVAMVLVLQTF). Residues 257 to 313 (RHVSDLHGLTELILLPPPCPASFNADEDDRVDILGPQPESHQQLSASSHTDYASIPR) are Cytoplasmic-facing. Residues 282 to 290 (DEDDRVDIL) carry the Lysosomal targeting signal motif. The segment at 288–313 (DILGPQPESHQQLSASSHTDYASIPR) is disordered. The span at 295 to 307 (ESHQQLSASSHTD) shows a compositional bias: polar residues. The Lysosomal targeting signal signature appears at 308–312 (YASIP).

The protein belongs to the two pore domain potassium channel (TC 1.A.1.8) family. Homodimer; disulfide-linked. N-glycosylation is necessary for targeting to lysosomes. Widespread expression, detected in all tissues tested except for skeletal muscle. Strongest expression in placenta, pancreas, heart, colon and spleen, lower levels detected in peripheral blood leukocytes, lung, liver, kidney and thymus. Lowest expression detected in brain.

It localises to the late endosome membrane. The protein resides in the lysosome membrane. The enzyme catalyses K(+)(in) = K(+)(out). K(+) channel that conducts outward rectifying currents at the membranes of the endolysosomal system. Active in lysosomes where it regulates lysosome numbers and size. In macrophages, enables K(+) efflux coupled to ATP-induced NLRP3 inflammasome activation upon bacterial infection. Cooperates with ATP-gated P2RX7 channels to activate NLRP3 inflammasome, with P2RX7 conducting Ca(2+) and Na(+) influx that sets the membrane potential for K(+) efflux. In terms of biological role, does not display channel activity. In Homo sapiens (Human), this protein is Potassium channel subfamily K member 6.